The sequence spans 228 residues: Lipoprotein-releasing system ATP-binding protein LolD (228 aa).

The ABC transporter domain occupies 6 to 227; sequence LELLGIDRTY…LKDGKLIDYV (222 aa). An ATP-binding site is contributed by 42 to 49; sequence GPSGSGKS.

This sequence belongs to the ABC transporter superfamily. Lipoprotein translocase (TC 3.A.1.125) family. As to quaternary structure, the complex is composed of two ATP-binding proteins (LolD) and two transmembrane proteins (LolC and LolE).

Its subcellular location is the cell inner membrane. In terms of biological role, part of the ABC transporter complex LolCDE involved in the translocation of mature outer membrane-directed lipoproteins, from the inner membrane to the periplasmic chaperone, LolA. Responsible for the formation of the LolA-lipoprotein complex in an ATP-dependent manner. This chain is Lipoprotein-releasing system ATP-binding protein LolD, found in Hyphomonas neptunium (strain ATCC 15444).